Reading from the N-terminus, the 217-residue chain is Peptide methionine sulfoxide reductase MsrA (217 aa).

Residue cysteine 56 is part of the active site.

It belongs to the MsrA Met sulfoxide reductase family.

It catalyses the reaction L-methionyl-[protein] + [thioredoxin]-disulfide + H2O = L-methionyl-(S)-S-oxide-[protein] + [thioredoxin]-dithiol. The enzyme catalyses [thioredoxin]-disulfide + L-methionine + H2O = L-methionine (S)-S-oxide + [thioredoxin]-dithiol. In terms of biological role, has an important function as a repair enzyme for proteins that have been inactivated by oxidation. Catalyzes the reversible oxidation-reduction of methionine sulfoxide in proteins to methionine. This is Peptide methionine sulfoxide reductase MsrA from Corynebacterium glutamicum (strain R).